The sequence spans 738 residues: MLGTKQVFSTEWGGRPLSVEVGQLAKQANGSALVRYGDTVVLATVTASKAPKDLDFFPLTVNYEEKLYSVGKIPGGFLRREGRPGENAILTSRLIDRPIRPLFPDGFRHDIQVMIYVMSNDPDCSAEMAGMLGTSIALSISDVPFDGPIAGVTVGRVDGEFVINPTTAQLEKTDLELQVAGTSTAINMVEAGANEVPEDVMLESILFGHEEIKRLIAFQQEIVEAVGKPKFEYTVSKYDEALTAELEAARPEIVEAVQVEEKHARDEAINEVIAKYVAMYEARLADEPSKLGEVSGILNKFVKDEVRRLITVEKVRPDGRRPDVIRPLASEVGLLPRAHGVGLFTRGQTQVMSVATLGVIGDAQIIDGIGLEENKRFMHHYNFPPFSVGEARPVRAPGRREIGHGALGERALLPIIPKEADFPYTIRLVSEVLESNGSSSQASICGSTLALMDAGVPIKAPVAGIAMGLIMEGEHYTVLTDIQGLEDHLGDMDFKVAGTKDGITALQMDIKIAGITREILEEALEQARVGRLHILDHMLETLETPRTQLSKYAPKIVTMTINPDKIRDVIGPGGKMINSIIDQTGVKIDIEQDGTVFIASTDQEGIDLAMSMIGDIVREVVVGEVYDATVRRIEKFGAFVELFKGKDALVHVSEFSLERVANVEDVVKLGDSIQVKVTEIDDKGRVNASRKALILEGLSPEEREAYEAKRKAARESRPPRDSRPPRRDGDRRPPRSTN.

Mg(2+) is bound by residues aspartate 487 and aspartate 493. The region spanning 554-613 is the KH domain; the sequence is PKIVTMTINPDKIRDVIGPGGKMINSIIDQTGVKIDIEQDGTVFIASTDQEGIDLAMSMI. The S1 motif domain occupies 623 to 691; sequence GEVYDATVRR…DKGRVNASRK (69 aa). Positions 704-738 are disordered; it reads EAYEAKRKAARESRPPRDSRPPRRDGDRRPPRSTN.

It belongs to the polyribonucleotide nucleotidyltransferase family. Mg(2+) serves as cofactor.

It localises to the cytoplasm. The enzyme catalyses RNA(n+1) + phosphate = RNA(n) + a ribonucleoside 5'-diphosphate. Involved in mRNA degradation. Catalyzes the phosphorolysis of single-stranded polyribonucleotides processively in the 3'- to 5'-direction. The chain is Polyribonucleotide nucleotidyltransferase from Exiguobacterium sp. (strain ATCC BAA-1283 / AT1b).